Here is a 729-residue protein sequence, read N- to C-terminus: Anti-bacteriophage protein B (729 aa).

The Helicase ATP-binding domain occupies 109–271; it reads FDLLKSGQNV…KLGYPHTFVS (163 aa). Residue 122 to 129 participates in ATP binding; the sequence is APTSMGKS. Residues 297-472 enclose the Helicase C-terminal domain; the sequence is ALGEIAHACV…GIDTPINLLA (176 aa).

It belongs to the helicase family. Interacts with AbpB.

Its function is as follows. Part of an antiviral system composed of AbpA and AbpB; when both are expressed from a plasmid they confer resistance to phages T2, T4, T7 and lambda but not RB32 or RB69. Resistance is temperature dependent, it can be seen at 30 degrees Celsius but not at 37 or 42 degrees Celsius. The system impairs phage but not bacterial DNA synthesis (shown for T4, T7 and lambda). Partially suppressed by mutations in T4 gene 41, a replicative helicase. Functionally, deletion or mutations in this gene were selected in directed evolution experiments for resistance to intense ionizing radiation (3000 Gy). This is Anti-bacteriophage protein B from Escherichia coli (strain K12).